The chain runs to 562 residues: Dihydroxy-acid dehydratase (562 aa).

Residue aspartate 80 coordinates Mg(2+). Cysteine 121 is a binding site for [2Fe-2S] cluster. Mg(2+) contacts are provided by aspartate 122 and lysine 123. Lysine 123 carries the N6-carboxylysine modification. A [2Fe-2S] cluster-binding site is contributed by cysteine 194. Glutamate 446 serves as a coordination point for Mg(2+). Catalysis depends on serine 472, which acts as the Proton acceptor.

It belongs to the IlvD/Edd family. In terms of assembly, homodimer. The cofactor is [2Fe-2S] cluster. Mg(2+) is required as a cofactor.

The enzyme catalyses (2R)-2,3-dihydroxy-3-methylbutanoate = 3-methyl-2-oxobutanoate + H2O. It catalyses the reaction (2R,3R)-2,3-dihydroxy-3-methylpentanoate = (S)-3-methyl-2-oxopentanoate + H2O. The protein operates within amino-acid biosynthesis; L-isoleucine biosynthesis; L-isoleucine from 2-oxobutanoate: step 3/4. It functions in the pathway amino-acid biosynthesis; L-valine biosynthesis; L-valine from pyruvate: step 3/4. Functions in the biosynthesis of branched-chain amino acids. Catalyzes the dehydration of (2R,3R)-2,3-dihydroxy-3-methylpentanoate (2,3-dihydroxy-3-methylvalerate) into 2-oxo-3-methylpentanoate (2-oxo-3-methylvalerate) and of (2R)-2,3-dihydroxy-3-methylbutanoate (2,3-dihydroxyisovalerate) into 2-oxo-3-methylbutanoate (2-oxoisovalerate), the penultimate precursor to L-isoleucine and L-valine, respectively. This chain is Dihydroxy-acid dehydratase, found in Macrococcus caseolyticus (strain JCSC5402) (Macrococcoides caseolyticum).